Reading from the N-terminus, the 797-residue chain is Xaa-Pro dipeptidyl-peptidase (797 aa).

Catalysis depends on charge relay system residues serine 370, aspartate 490, and histidine 521.

Belongs to the peptidase S15 family. As to quaternary structure, homodimer.

It is found in the cytoplasm. The enzyme catalyses Hydrolyzes Xaa-Pro-|- bonds to release unblocked, N-terminal dipeptides from substrates including Ala-Pro-|-p-nitroanilide and (sequentially) Tyr-Pro-|-Phe-Pro-|-Gly-Pro-|-Ile.. Functionally, removes N-terminal dipeptides sequentially from polypeptides having unsubstituted N-termini provided that the penultimate residue is proline. This Lacticaseibacillus rhamnosus (Lactobacillus rhamnosus) protein is Xaa-Pro dipeptidyl-peptidase.